The following is a 662-amino-acid chain: Aprataxin-like protein (662 aa).

Residues 4 to 108 enclose the HIT domain; sequence SSALIKDISK…ISKDFVSTSL (105 aa). The C2H2-type zinc finger occupies 381–403; that stretch reads LRCNQCEFVTNMLLDLKAHLYQH. The tract at residues 482 to 662 is disordered; sequence KNINGPSVNM…PAPPSNSKPS (181 aa). The span at 490–500 shows a compositional bias: low complexity; sequence NMMNQNNPNNP. Composition is skewed to polar residues over residues 501–513 and 560–569; these read FRNT…QSQK and GHQQFPNASS. Over residues 570 to 582 the composition is skewed to gly residues; it reads VGGGQTGLPGQGQ. The span at 588–599 shows a compositional bias: polar residues; that stretch reads WNSNKIFNQQNR. Residues 600–626 show a composition bias toward low complexity; it reads QNTVQAQPQAQNQQTNQQQIQNSNKNQ. Residues 653-662 are compositionally biased toward pro residues; that stretch reads PAPPSNSKPS.

Its subcellular location is the nucleus. In terms of biological role, DNA-binding protein involved in single-strand DNA break repair, double-strand DNA break repair and base excision repair. Resolves abortive DNA ligation intermediates formed either at base excision sites, or when DNA ligases attempt to repair non-ligatable breaks induced by reactive oxygen species. Catalyzes the release of adenylate groups covalently linked to 5'-phosphate termini, resulting in the production of 5'-phosphate termini that can be efficiently rejoined. The polypeptide is Aprataxin-like protein (Drosophila melanogaster (Fruit fly)).